The following is a 260-amino-acid chain: Zinc import ATP-binding protein ZnuC (260 aa).

The 217-residue stretch at 18 to 234 folds into the ABC transporter domain; the sequence is IRLQEVAVTF…PEYQKLFGSH (217 aa). ATP is bound at residue 50–57; it reads GNNGAGKT. The tract at residues 241–260 is disordered; the sequence is VFPHDHHDHSGPALAGGGRG.

Belongs to the ABC transporter superfamily. Zinc importer (TC 3.A.1.15.5) family. As to quaternary structure, the complex is composed of two ATP-binding proteins (ZnuC), two transmembrane proteins (ZnuB) and a solute-binding protein (ZnuA).

Its subcellular location is the cell inner membrane. It catalyses the reaction Zn(2+)(out) + ATP(in) + H2O(in) = Zn(2+)(in) + ADP(in) + phosphate(in) + H(+)(in). Functionally, part of the ABC transporter complex ZnuABC involved in zinc import. Responsible for energy coupling to the transport system. This is Zinc import ATP-binding protein ZnuC from Halorhodospira halophila (strain DSM 244 / SL1) (Ectothiorhodospira halophila (strain DSM 244 / SL1)).